The chain runs to 230 residues: 7-cyano-7-deazaguanine synthase (230 aa).

16-26 (LSGGLDSMVSG) provides a ligand contact to ATP. Cys195, Cys205, Cys208, and Cys211 together coordinate Zn(2+).

The protein belongs to the QueC family. Zn(2+) serves as cofactor.

It catalyses the reaction 7-carboxy-7-deazaguanine + NH4(+) + ATP = 7-cyano-7-deazaguanine + ADP + phosphate + H2O + H(+). Its pathway is purine metabolism; 7-cyano-7-deazaguanine biosynthesis. Its function is as follows. Catalyzes the ATP-dependent conversion of 7-carboxy-7-deazaguanine (CDG) to 7-cyano-7-deazaguanine (preQ(0)). This chain is 7-cyano-7-deazaguanine synthase, found in Rhizorhabdus wittichii (strain DSM 6014 / CCUG 31198 / JCM 15750 / NBRC 105917 / EY 4224 / RW1) (Sphingomonas wittichii).